The chain runs to 245 residues: Uridylate kinase (245 aa).

20 to 23 (KLSG) contacts ATP. Glycine 60 serves as a coordination point for UMP. ATP-binding residues include glycine 61 and arginine 65. UMP is bound by residues aspartate 80 and 141–148 (AGLPYFST). Tyrosine 175 and aspartate 178 together coordinate ATP.

This sequence belongs to the UMP kinase family. Homohexamer.

The protein resides in the cytoplasm. It catalyses the reaction UMP + ATP = UDP + ADP. It participates in pyrimidine metabolism; CTP biosynthesis via de novo pathway; UDP from UMP (UMPK route): step 1/1. Inhibited by UTP. Functionally, catalyzes the reversible phosphorylation of UMP to UDP. The chain is Uridylate kinase from Paenarthrobacter aurescens (strain TC1).